Reading from the N-terminus, the 555-residue chain is MGQTASSPQDNKESKSHPQFKTRDEILQYFNTRVVKLFTVTEIAAFKKRFNAIDLNEPIDDTLIKEALYLDAQPNVWSAVSETIRLLQNFPLFHQPIADSITGFGLLKVIAIINVKRFEKLVNTTITRYDITVTLGLCGQAKESENKIKSTNLGDILKTYDHIEIESIHIPYDKLILLVAWLLTLVTGVATTNCKVELSDTIANWNNFKSSAISIANTISTSALGNANDIGIPATDILNAFNTIMISLVPYMSNLFEHLLFGVDDLIDHVNDLANLSHQDVLTPSLYAQVIIGLPNSITITKLQKLYVGKESGFSMRSLQSKVFRWKAPTLMIVSGTRISDDESYADSKNPRYRSFLYSFPKLRENDQNLDAIHLTKKKVTYAVYIDEPWKVSNKEKFGATNMTIMELTPQQKTYQSCMERTMYFNTIGGGIGVGSEQPIVKQNDIKFIPGNISLTMDSSLEFGVFRHVGAGGGFKTSLLDNDDSKSFEIRFIIQNVEVWGCGGEKELAEQLKQLEWEEAEAKRRQTINLQSLSEDKALLEMVGLVGQHQSGGSV.

Positions 280–503 constitute a TLDc domain; it reads DVLTPSLYAQ…IQNVEVWGCG (224 aa).

The protein belongs to the RTC5 family.

It localises to the cytoplasm. Functionally, may be involved in a process influencing telomere capping. This Candida glabrata (strain ATCC 2001 / BCRC 20586 / JCM 3761 / NBRC 0622 / NRRL Y-65 / CBS 138) (Yeast) protein is Restriction of telomere capping protein 5 (RTC5).